The chain runs to 647 residues: Golgi-associated RAB2B interactor protein 3 (647 aa).

The segment covering 188 to 202 (IPTADTSTETKSTLV) has biased composition (polar residues). Disordered regions lie at residues 188 to 220 (IPTA…TSQD), 267 to 296 (TAGA…GSAR), 361 to 384 (SKSP…QERS), and 465 to 573 (RDGS…GFVS). The segment covering 205-214 (IHGEGDRDSK) has biased composition (basic and acidic residues). The segment covering 361–378 (SKSPGSGQVATGLTGTAS) has biased composition (polar residues). Ser378 carries the phosphoserine modification. A compositionally biased stretch (basic and acidic residues) spans 478–491 (TQKEKRERRESDRK). Over residues 492-501 (GSRKSSHHQR) the composition is skewed to basic residues. A Bipartite nuclear localization signal motif is present at residues 494–511 (RKSSHHQRTGASRHSSSK). Basic and acidic residues predominate over residues 528–556 (KTREDKKEKGRGSLRDQRHSSSYRSESRT). 2 positions are modified to phosphoserine: Ser634 and Ser636.

The protein belongs to the GARIN family. Interacts (via N-terminus) with RAB2B (in GTP-bound form). Interacts with FRG1.

The protein resides in the golgi apparatus. It is found in the nucleus. The protein localises to the cajal body. Functionally, may be involved in RNA biogenesis. This chain is Golgi-associated RAB2B interactor protein 3 (Garin3), found in Rattus norvegicus (Rat).